We begin with the raw amino-acid sequence, 816 residues long: Pentatricopeptide repeat-containing protein At5g12100, mitochondrial (816 aa).

The N-terminal 39 residues, 1 to 39 (MVTRLRLVSRSSRYATVKFTDSVSACSCRRLFSASTDPE), are a transit peptide targeting the mitochondrion. Residues 34 to 57 (ASTDPEPESQPEQAPPTNPVTGDE) form a disordered region. PPR repeat units follow at residues 108 to 142 (HDFS…GIYP), 143 to 177 (SSDS…DFRP), 178 to 212 (SKFM…RIYP), 213 to 247 (SVFI…RLLP), 248 to 282 (SLIT…HIEP), 283 to 317 (SLIT…GFVP), 318 to 352 (DAFT…GVKM), 353 to 387 (NAYT…GLVP), 388 to 422 (NEVI…GMKP), 423 to 457 (DHLA…GVSP), 458 to 492 (SVET…GTMP), 493 to 527 (NVVS…GVSP), 528 to 562 (KVRI…GIEL), 563 to 597 (NLVT…GLKP), 598 to 632 (DVFT…GIKP), 633 to 662 (TLKT…MSLK), 664 to 698 (DLLV…SIGL), 699 to 733 (DKTT…EMEP), 734 to 768 (EADT…GFLL), and 769 to 803 (DVCI…MLGD).

The protein belongs to the PPR family. P subfamily.

The protein localises to the mitochondrion. In Arabidopsis thaliana (Mouse-ear cress), this protein is Pentatricopeptide repeat-containing protein At5g12100, mitochondrial.